The sequence spans 403 residues: CCA-adding enzyme (403 aa).

Positions 32 and 35 each coordinate ATP. CTP is bound by residues Gly32 and Arg35. Residues Asp45 and Asp47 each contribute to the Mg(2+) site. Arg116, Asp159, Arg162, Arg165, and Arg168 together coordinate ATP. Arg116, Asp159, Arg162, Arg165, and Arg168 together coordinate CTP.

It belongs to the tRNA nucleotidyltransferase/poly(A) polymerase family. Bacterial CCA-adding enzyme type 3 subfamily. Homodimer. The cofactor is Mg(2+).

The enzyme catalyses a tRNA precursor + 2 CTP + ATP = a tRNA with a 3' CCA end + 3 diphosphate. It carries out the reaction a tRNA with a 3' CCA end + 2 CTP + ATP = a tRNA with a 3' CCACCA end + 3 diphosphate. Catalyzes the addition and repair of the essential 3'-terminal CCA sequence in tRNAs without using a nucleic acid template. Adds these three nucleotides in the order of C, C, and A to the tRNA nucleotide-73, using CTP and ATP as substrates and producing inorganic pyrophosphate. tRNA 3'-terminal CCA addition is required both for tRNA processing and repair. Also involved in tRNA surveillance by mediating tandem CCA addition to generate a CCACCA at the 3' terminus of unstable tRNAs. While stable tRNAs receive only 3'-terminal CCA, unstable tRNAs are marked with CCACCA and rapidly degraded. The polypeptide is CCA-adding enzyme (Streptococcus uberis (strain ATCC BAA-854 / 0140J)).